The sequence spans 205 residues: Probable thymidylate kinase (205 aa).

Residue 10–17 (GIDGSGKS) coordinates ATP.

It belongs to the thymidylate kinase family.

The catalysed reaction is dTMP + ATP = dTDP + ADP. The chain is Probable thymidylate kinase from Methanosarcina barkeri (strain Fusaro / DSM 804).